A 410-amino-acid polypeptide reads, in one-letter code: Proteasome-activating nucleotidase (410 aa).

A coiled-coil region spans residues 1 to 70 (MENNSQNVLK…LRGEIERFRT (70 aa)). ATP is bound by residues 195-200 (GTGKTL) and H334. Positions 408–410 (MFG) are docks into pockets in the proteasome alpha-ring to cause gate opening.

This sequence belongs to the AAA ATPase family. Homohexamer. The hexameric complex has a two-ring architecture resembling a top hat that caps the 20S proteasome core at one or both ends. Upon ATP-binding, the C-terminus of PAN interacts with the alpha-rings of the proteasome core by binding to the intersubunit pockets.

It localises to the cytoplasm. ATPase which is responsible for recognizing, binding, unfolding and translocation of substrate proteins into the archaeal 20S proteasome core particle. Is essential for opening the gate of the 20S proteasome via an interaction with its C-terminus, thereby allowing substrate entry and access to the site of proteolysis. Thus, the C-termini of the proteasomal ATPase function like a 'key in a lock' to induce gate opening and therefore regulate proteolysis. Unfolding activity requires energy from ATP hydrolysis, whereas ATP binding alone promotes ATPase-20S proteasome association which triggers gate opening, and supports translocation of unfolded substrates. The sequence is that of Proteasome-activating nucleotidase from Methanothermobacter thermautotrophicus (strain ATCC 29096 / DSM 1053 / JCM 10044 / NBRC 100330 / Delta H) (Methanobacterium thermoautotrophicum).